We begin with the raw amino-acid sequence, 577 residues long: Serine/threonine-protein kinase AGC1-5 (577 aa).

Residues 1–12 are compositionally biased toward polar residues; it reads MDLASKKNTANV. Residues 1–151 are disordered; sequence MDLASKKNTA…DYAYGDNLVG (151 aa). Residues 44–55 are compositionally biased toward basic and acidic residues; it reads PHFDPKKMDPLV. Composition is skewed to polar residues over residues 69–87 and 110–120; these read TRGT…SSDG and LTTSETYSPSA. A Protein kinase domain is found at 185 to 509; that stretch reads FRLLKRLGYG…ATEIKQHPFF (325 aa). ATP contacts are provided by residues 191-199 and lysine 214; that span reads LGYGDIGSV. Aspartate 310 (proton acceptor) is an active-site residue. One can recognise an AGC-kinase C-terminal domain in the interval 510–577; the sequence is EGVNWALVRS…DTAYIDFEYF (68 aa).

Belongs to the protein kinase superfamily. AGC Ser/Thr protein kinase family. In terms of assembly, interacts with PDPK1/PDK1. In terms of processing, autophosphorylated and phosphorylated by PDPK1/PDK1. In terms of tissue distribution, specifically expressed in pollen grains.

The catalysed reaction is L-seryl-[protein] + ATP = O-phospho-L-seryl-[protein] + ADP + H(+). The enzyme catalyses L-threonyl-[protein] + ATP = O-phospho-L-threonyl-[protein] + ADP + H(+). Its activity is regulated as follows. Activated by PDPK1/PDK1. Its function is as follows. Functions redudantly with AGC1-7 as signaling component in the pollen tube. Required for polarized growth of pollen tubes. The protein is Serine/threonine-protein kinase AGC1-5 of Arabidopsis thaliana (Mouse-ear cress).